Reading from the N-terminus, the 441-residue chain is Endothelin receptor type B (441 aa).

Residues 1–26 (MQPPPSLCGLALLALVLACGMAEVWG) form the signal peptide. Over 27 to 100 (EEREMPSAPA…RPTEIKDTFK (74 aa)) the chain is Extracellular. Positions 30 to 90 (EMPSAPATPP…APRRTPPPCQ (61 aa)) are disordered. Residues 47-65 (LTPSTKTSWPRDSNASLPR) show a composition bias toward polar residues. A glycan (N-linked (GlcNAc...) asparagine) is linked at Asn60. The helical transmembrane segment at 101 to 125 (YINTVVSCLVFVLGIIGNSTLLRII) threads the bilayer. At 126–136 (YKNKCMRNGPN) the chain is on the cytoplasmic side. The chain crosses the membrane as a helical span at residues 137-162 (ILIASLALGDLLHIIIDIPINVYKLL). Residues 163-174 (AEDWPFGAEMCK) lie on the Extracellular side of the membrane. Residues Cys173 and Cys254 are joined by a disulfide bond. The chain crosses the membrane as a helical span at residues 175 to 196 (LVPFIQKASVGITVLSLCALSI). The Cytoplasmic segment spans residues 197 to 217 (DRYRAVASWSRIKGIGVPKWT). Residues 218–242 (AVEIVLIWVVSVILAVPEAIGFNLV) traverse the membrane as a helical segment. At 243–270 (TIDYKGSYLRICLLNPTQKTAFMQFYKT) the chain is on the extracellular side. Residues 271-295 (AKDWWLFSFYFCLPLAITAFFYTLM) traverse the membrane as a helical segment. Residues 296–323 (TCEMLRKKSGMQIALNDHLKQRREVAKT) lie on the Cytoplasmic side of the membrane. Ser304 bears the Phosphoserine mark. Residues 324-349 (VFCLVLVFGLCWLALHLSRILKLTLY) form a helical membrane-spanning segment. Residues 350-361 (DQNDPNRCELLS) lie on the Extracellular side of the membrane. A helical transmembrane segment spans residues 362 to 388 (FLLVLDYIGINMASLNSCINPIALYLV). Residues 389 to 441 (SKRFKNCFKSCLCCWCQSFEEKQSLEEKQSCLKFKANDHGYDNFRSSNKYSSS) are Cytoplasmic-facing. Residues Cys402 and Cys404 are each lipidated (S-palmitoyl cysteine). At Ser418 the chain carries Phosphoserine. The residue at position 438 (Tyr438) is a Phosphotyrosine. Ser439, Ser440, and Ser441 each carry phosphoserine.

This sequence belongs to the G-protein coupled receptor 1 family. Endothelin receptor subfamily. EDNRB sub-subfamily.

Its subcellular location is the cell membrane. In terms of biological role, non-specific receptor for endothelin 1, 2, and 3. Mediates its action by association with G proteins that activate a phosphatidylinositol-calcium second messenger system. The protein is Endothelin receptor type B (EDNRB) of Oryctolagus cuniculus (Rabbit).